The following is a 129-amino-acid chain: GEL complex subunit OPTI (129 aa).

The Cytoplasmic segment spans residues 1–44 (MSGGRRKEEPPQPQLANGALKVSVWSKVLRSDAAWEDKDEFLDV). A helical transmembrane segment spans residues 45-65 (IYWFRQIIAVVLGVIWGVLPL). A topological domain (lumenal) is located at residue R66. The chain crosses the membrane as a helical span at residues 67–84 (GFLGIAGFCVINAGVLYL). Over 85 to 103 (YFSNYLQIDEEEYGGTWEL) the chain is Cytoplasmic. Residues 104–127 (TKEGFMTSFALFMVIWIIFYTAIH) traverse the membrane as a helical segment. The Lumenal segment spans residues 128-129 (YD).

It belongs to the EMC6 family. Component of the GET- and EMC-like (GEL) complex, composed of RAB5IF/OPTI and TMCO1. The GEL complex is part of the multi-pass translocon (MPT) complex, composed of three subcomplexes, the GEL complex (composed of RAB5IF/OPTI and TMCO1), the BOS complex (composed of NCLN/Nicalin, NOMO1 and TMEM147) and the PAT complex (composed of WDR83OS/Asterix and CCDC47). The MPT complex associates with the SEC61 complex. Interacts with NDUFS3, NDUFA4, NDUFV1, NDUFA9 and NDUFS8 of the mitochondrial membrane respiratory chain NADH dehydrogenase (Complex I). Interacts with UQCRC2 of the ubiquinol-cytochrome c reductase complex (Complex III). Interacts with COX5A and COX7C of the cytochrome c oxidase complex (Complex IV).

The protein resides in the endoplasmic reticulum membrane. It is found in the mitochondrion inner membrane. Functionally, component of the multi-pass translocon (MPT) complex that mediates insertion of multi-pass membrane proteins into the lipid bilayer of membranes. The MPT complex takes over after the SEC61 complex: following membrane insertion of the first few transmembrane segments of proteins by the SEC61 complex, the MPT complex occludes the lateral gate of the SEC61 complex to promote insertion of subsequent transmembrane regions. Within the MPT complex, the GEL subcomplex may mediate insertion of transmembrane regions into the membrane. In addition to its role in multi-pass membrane insertion, RAB5IF/OPTI also acts as an assembly factor for mitochondrial respiratory complexes. This chain is GEL complex subunit OPTI (RAB5IF), found in Canis lupus familiaris (Dog).